A 339-amino-acid polypeptide reads, in one-letter code: Methionine import ATP-binding protein MetN 2 (339 aa).

The region spanning 2–241 is the ABC transporter domain; sequence ISFNNVSKVY…PKTKTTQNFV (240 aa). Residue 38–45 coordinates ATP; the sequence is GFSGAGKS.

It belongs to the ABC transporter superfamily. Methionine importer (TC 3.A.1.24) family. As to quaternary structure, the complex is composed of two ATP-binding proteins (MetN), two transmembrane proteins (MetI) and a solute-binding protein (MetQ).

Its subcellular location is the cell membrane. The catalysed reaction is L-methionine(out) + ATP + H2O = L-methionine(in) + ADP + phosphate + H(+). It carries out the reaction D-methionine(out) + ATP + H2O = D-methionine(in) + ADP + phosphate + H(+). Functionally, part of the ABC transporter complex MetNIQ involved in methionine import. Responsible for energy coupling to the transport system. This chain is Methionine import ATP-binding protein MetN 2, found in Bacillus cereus (strain ZK / E33L).